Here is a 307-residue protein sequence, read N- to C-terminus: Homoserine O-acetyltransferase (307 aa).

Catalysis depends on Cys-142, which acts as the Acyl-thioester intermediate. The substrate site is built by Lys-163 and Ser-192. The active-site Proton acceptor is the His-235. Residue Glu-237 is part of the active site. Arg-249 is a binding site for substrate.

The protein belongs to the MetA family.

It localises to the cytoplasm. It carries out the reaction L-homoserine + acetyl-CoA = O-acetyl-L-homoserine + CoA. It participates in amino-acid biosynthesis; L-methionine biosynthesis via de novo pathway; O-acetyl-L-homoserine from L-homoserine: step 1/1. In terms of biological role, transfers an acetyl group from acetyl-CoA to L-homoserine, forming acetyl-L-homoserine. The polypeptide is Homoserine O-acetyltransferase (Rhizobium leguminosarum bv. trifolii (strain WSM2304)).